The primary structure comprises 120 residues: Membrane-anchored ubiquitin-fold protein 4 (120 aa).

The Ubiquitin-like domain occupies 7–73 (VELKFRLYDG…LENGKTVAQC (67 aa)). Cys115 carries the S-palmitoyl cysteine lipid modification. Cysteine methyl ester is present on Cys117. Cys117 carries the S-farnesyl cysteine lipid modification. Residues 118–120 (TIM) constitute a propeptide, removed in mature form.

In terms of tissue distribution, ubiquitous.

It is found in the cell membrane. May serve as docking site to facilitate the association of other proteins to the plasma membrane. The protein is Membrane-anchored ubiquitin-fold protein 4 (MUB4) of Arabidopsis thaliana (Mouse-ear cress).